A 198-amino-acid chain; its full sequence is Probable chemoreceptor glutamine deamidase CheD (198 aa).

Belongs to the CheD family.

It carries out the reaction L-glutaminyl-[protein] + H2O = L-glutamyl-[protein] + NH4(+). Its function is as follows. Probably deamidates glutamine residues to glutamate on methyl-accepting chemotaxis receptors (MCPs), playing an important role in chemotaxis. The protein is Probable chemoreceptor glutamine deamidase CheD of Stenotrophomonas maltophilia (strain K279a).